Reading from the N-terminus, the 553-residue chain is Chaperonin GroEL 1 (553 aa).

ATP contacts are provided by residues T29–P32, D86–T90, G413, N476–L478, and D492. Residues K521–G542 form a disordered region. Residues D533–G542 are compositionally biased toward gly residues.

Belongs to the chaperonin (HSP60) family. In terms of assembly, forms a cylinder of 14 subunits composed of two heptameric rings stacked back-to-back. Interacts with the co-chaperonin GroES.

It is found in the cytoplasm. The enzyme catalyses ATP + H2O + a folded polypeptide = ADP + phosphate + an unfolded polypeptide.. Functionally, together with its co-chaperonin GroES, plays an essential role in assisting protein folding. The GroEL-GroES system forms a nano-cage that allows encapsulation of the non-native substrate proteins and provides a physical environment optimized to promote and accelerate protein folding. The protein is Chaperonin GroEL 1 of Synechococcus sp. (strain WH7803).